The chain runs to 716 residues: Phosphoribosylformylglycinamidine synthase subunit PurL (716 aa).

Residue His-34 is part of the active site. Tyr-37 serves as a coordination point for ATP. Glu-78 provides a ligand contact to Mg(2+). Residues 79–82 (SHNH) and Arg-101 each bind substrate. His-80 functions as the Proton acceptor in the catalytic mechanism. Residue Asp-102 coordinates Mg(2+). Gln-226 serves as a coordination point for substrate. Position 254 (Asp-254) interacts with Mg(2+). 298–300 (ESQ) is a substrate binding site. The ATP site is built by Asp-474 and Gly-511. Asn-512 lines the Mg(2+) pocket. Ser-514 contributes to the substrate binding site.

The protein belongs to the FGAMS family. As to quaternary structure, monomer. Part of the FGAM synthase complex composed of 1 PurL, 1 PurQ and 2 PurS subunits.

Its subcellular location is the cytoplasm. It carries out the reaction N(2)-formyl-N(1)-(5-phospho-beta-D-ribosyl)glycinamide + L-glutamine + ATP + H2O = 2-formamido-N(1)-(5-O-phospho-beta-D-ribosyl)acetamidine + L-glutamate + ADP + phosphate + H(+). The protein operates within purine metabolism; IMP biosynthesis via de novo pathway; 5-amino-1-(5-phospho-D-ribosyl)imidazole from N(2)-formyl-N(1)-(5-phospho-D-ribosyl)glycinamide: step 1/2. In terms of biological role, part of the phosphoribosylformylglycinamidine synthase complex involved in the purines biosynthetic pathway. Catalyzes the ATP-dependent conversion of formylglycinamide ribonucleotide (FGAR) and glutamine to yield formylglycinamidine ribonucleotide (FGAM) and glutamate. The FGAM synthase complex is composed of three subunits. PurQ produces an ammonia molecule by converting glutamine to glutamate. PurL transfers the ammonia molecule to FGAR to form FGAM in an ATP-dependent manner. PurS interacts with PurQ and PurL and is thought to assist in the transfer of the ammonia molecule from PurQ to PurL. The protein is Phosphoribosylformylglycinamidine synthase subunit PurL of Methanobrevibacter smithii (strain ATCC 35061 / DSM 861 / OCM 144 / PS).